The primary structure comprises 394 residues: Probable purine permease 8 (394 aa).

Helical transmembrane passes span 45 to 65 (WLRISIYVFFVLACQALSTIL), 77 to 97 (TWMGTLVQLIGFPVLFLFRFF), 113 to 133 (FSSFTILGSVYIVTGLLVSAN), 139 to 159 (VGLLYLPVSTFSLILASQLAF), 172 to 192 (FTPFIVNSLFLLTISSALLVV), 208 to 228 (VIGIICTIGASAGIGLLLSLV), 247 to 267 (LVAYQSLVASCVVLIGLFASG), 289 to 309 (TLASIAISWQVYTIGVVGLIF), 315 to 335 (FSNSITAVGLPIVPVVAVIVF), and 344 to 364 (IFSIILAIWGFISFVYQHYLD). A disordered region spans residues 373–394 (TSPVGDPHLLPAEEGHTNIHSV). Residues 383–394 (PAEEGHTNIHSV) are compositionally biased toward basic and acidic residues.

The protein belongs to the purine permeases (TC 2.A.7.14) family.

The protein resides in the membrane. The protein is Probable purine permease 8 (PUP8) of Arabidopsis thaliana (Mouse-ear cress).